Here is a 327-residue protein sequence, read N- to C-terminus: Flap endonuclease 1 (327 aa).

Residues 1 to 100 are N-domain; sequence MGNADLRQLA…DEIADRREQR (100 aa). 7 residues coordinate Mg(2+): Asp28, Asp82, Glu154, Glu156, Asp176, Asp178, and Asp226. Residues 118–247 are I-domain; it reads EAARLDARTQ…TALDAIGEHG (130 aa). Residues 319 to 327 are interaction with PCNA; the sequence is AQTGLDRWT.

This sequence belongs to the XPG/RAD2 endonuclease family. FEN1 subfamily. As to quaternary structure, interacts with PCNA. PCNA stimulates the nuclease activity without altering cleavage specificity. Mg(2+) serves as cofactor.

Functionally, structure-specific nuclease with 5'-flap endonuclease and 5'-3' exonuclease activities involved in DNA replication and repair. During DNA replication, cleaves the 5'-overhanging flap structure that is generated by displacement synthesis when DNA polymerase encounters the 5'-end of a downstream Okazaki fragment. Binds the unpaired 3'-DNA end and kinks the DNA to facilitate 5' cleavage specificity. Cleaves one nucleotide into the double-stranded DNA from the junction in flap DNA, leaving a nick for ligation. Also involved in the base excision repair (BER) pathway. Acts as a genome stabilization factor that prevents flaps from equilibrating into structures that lead to duplications and deletions. Also possesses 5'-3' exonuclease activity on nicked or gapped double-stranded DNA. This chain is Flap endonuclease 1, found in Halobacterium salinarum (strain ATCC 29341 / DSM 671 / R1).